Consider the following 288-residue polypeptide: MEISRLAQSKRNIISLNMDLERDTQRIDEANQKLLLKIQEREDKIQRLESEIIQTRGLVEDEEWEKENRTTMERERALQELEEETARLERKNKTLVHSITELQQKLTRKSQKITNCEQSSPDGALEETKVKLQQLEASYACQEKELLKVMKEYAFVTQLCEDQALYIKKYQETLKKIEEELEALFLEREVSKLVSMNPVEKEHTSQNNEGTPTQKTARLFSKKIFCCLFFITLFFIRLLSYMFFHVRFINPDLLVNVLPKVLGRSTLWKLRCFFFPSLTLETEDMLPH.

Residues 10–192 (KRNIISLNMD…ALFLEREVSK (183 aa)) adopt a coiled-coil conformation. Residues 224 to 244 (IFCCLFFITLFFIRLLSYMFF) traverse the membrane as a helical segment.

The protein belongs to the TMCO5 family.

It localises to the endoplasmic reticulum membrane. It is found in the nucleus membrane. This Homo sapiens (Human) protein is Transmembrane and coiled-coil domain-containing protein 5A (TMCO5A).